The sequence spans 430 residues: Glutamate-1-semialdehyde 2,1-aminomutase (430 aa).

At K265 the chain carries N6-(pyridoxal phosphate)lysine.

The protein belongs to the class-III pyridoxal-phosphate-dependent aminotransferase family. HemL subfamily. In terms of assembly, homodimer. Requires pyridoxal 5'-phosphate as cofactor.

The protein resides in the cytoplasm. It catalyses the reaction (S)-4-amino-5-oxopentanoate = 5-aminolevulinate. It participates in porphyrin-containing compound metabolism; protoporphyrin-IX biosynthesis; 5-aminolevulinate from L-glutamyl-tRNA(Glu): step 2/2. In Helicobacter pylori (strain ATCC 700392 / 26695) (Campylobacter pylori), this protein is Glutamate-1-semialdehyde 2,1-aminomutase (hemL).